We begin with the raw amino-acid sequence, 177 residues long: Nucleoside triphosphate/diphosphate phosphatase (177 aa).

Arg23 serves as the catalytic Proton donor. The Mg(2+) site is built by Asn87, Asp103, Asp105, Asp107, Asp120, and Glu123.

The protein belongs to the Ntdp family. Requires Mg(2+) as cofactor.

The catalysed reaction is a ribonucleoside 5'-triphosphate + H2O = a ribonucleoside 5'-diphosphate + phosphate + H(+). It catalyses the reaction a ribonucleoside 5'-diphosphate + H2O = a ribonucleoside 5'-phosphate + phosphate + H(+). Its function is as follows. Has nucleoside phosphatase activity towards nucleoside triphosphates and nucleoside diphosphates. In Streptococcus thermophilus (strain ATCC BAA-491 / LMD-9), this protein is Nucleoside triphosphate/diphosphate phosphatase.